Reading from the N-terminus, the 610-residue chain is 6(G)-fructosyltransferase (610 aa).

Residues 1-20 lie on the Cytoplasmic side of the membrane; the sequence is MATSLQAPILGSRPPRRTLR. Residues 21-38 traverse the membrane as a helical; Signal-anchor for type II membrane protein segment; it reads FLSFALFSALVLVVASFS. At 39–610 the chain is on the vacuolar side; it reads SRKSESGSGL…NQYYPFTSSN (572 aa). Residues 79-82, Gln98, Trp106, 141-142, and 207-208 contribute to the substrate site; these read YMND, WT, and RD. Asp82 is an active-site residue. Residues Asn215, Asn229, and Asn248 are each glycosylated (N-linked (GlcNAc...) asparagine). Glu266 is a substrate binding site. N-linked (GlcNAc...) asparagine glycosylation occurs at Asn459. Residues Cys460 and Cys508 are joined by a disulfide bond. Residues Asn580 and Asn597 are each glycosylated (N-linked (GlcNAc...) asparagine).

The protein belongs to the glycosyl hydrolase 32 family. Might be processed in two N-terminal and C-terminal proteolytic fragments.

The protein resides in the vacuole membrane. It carries out the reaction [1-beta-D-fructofuranosyl-(2-&gt;1)-]m+1 alpha-D-glucopyranoside + [1-beta-D-fructofuranosyl-(2-&gt;1)-]n+1 alpha-D-glucopyranoside = [1-beta-D-fructofuranosyl-(2-&gt;1)-]m alpha-D-glucopyranoside + [1-beta-D-fructofuranosyl-(2-&gt;1)-]n+1 beta-D-fructofuranosyl-(2-&gt;6)-alpha-D-glucopyranoside (m &gt; 0, n &gt;= 0).. Functionally, involved in the synthesis of fructan of the inulin neoseries. Has no 1-FFT activity. The protein is 6(G)-fructosyltransferase (FT1) of Asparagus officinalis (Garden asparagus).